Here is a 495-residue protein sequence, read N- to C-terminus: Cobyric acid synthase (495 aa).

The 184-residue stretch at C262–W445 folds into the GATase cobBQ-type domain. C340 functions as the Nucleophile in the catalytic mechanism. H437 is a catalytic residue.

The protein belongs to the CobB/CobQ family. CobQ subfamily.

The protein operates within cofactor biosynthesis; adenosylcobalamin biosynthesis. Catalyzes amidations at positions B, D, E, and G on adenosylcobyrinic A,C-diamide. NH(2) groups are provided by glutamine, and one molecule of ATP is hydrogenolyzed for each amidation. This chain is Cobyric acid synthase, found in Synechococcus sp. (strain JA-3-3Ab) (Cyanobacteria bacterium Yellowstone A-Prime).